A 502-amino-acid chain; its full sequence is ATP synthase subunit alpha (502 aa).

ATP is bound at residue 169 to 176 (GDRQTGKT).

It belongs to the ATPase alpha/beta chains family. As to quaternary structure, F-type ATPases have 2 components, CF(1) - the catalytic core - and CF(0) - the membrane proton channel. CF(1) has five subunits: alpha(3), beta(3), gamma(1), delta(1), epsilon(1). CF(0) has three main subunits: a(1), b(2) and c(9-12). The alpha and beta chains form an alternating ring which encloses part of the gamma chain. CF(1) is attached to CF(0) by a central stalk formed by the gamma and epsilon chains, while a peripheral stalk is formed by the delta and b chains.

It is found in the cell membrane. The enzyme catalyses ATP + H2O + 4 H(+)(in) = ADP + phosphate + 5 H(+)(out). Its function is as follows. Produces ATP from ADP in the presence of a proton gradient across the membrane. The alpha chain is a regulatory subunit. This Staphylococcus aureus (strain bovine RF122 / ET3-1) protein is ATP synthase subunit alpha.